A 722-amino-acid chain; its full sequence is Tudor domain-containing protein 3 (722 aa).

A UBA domain is found at Leu264 to Ser304. Disordered regions lie at residues Asn305–Ser342, Leu355–Ser453, and Ser470–Asp526. Position 327 is a phosphoserine (Ser327). Positions Ser362–Pro388 are enriched in polar residues. Basic and acidic residues-rich tracts occupy residues Pro392–Arg409 and Ala442–Ser453. Lys541 is covalently cross-linked (Glycyl lysine isopeptide (Lys-Gly) (interchain with G-Cter in SUMO2)). The Tudor domain occupies Leu626–Glu686. Positions Glu695–Pro704 are enriched in basic and acidic residues. The tract at residues Glu695–Asn722 is disordered. Positions Gly702–Asn722 are EBM motif; may mediate interaction with the EJC.

Component of mRNA stress granules. Interacts with FMR1, FXR1, FXR2, EWSR1, FUS, SERBP1, EEF1A1 and DDX3X or DDX3Y, and with the small nuclear ribonucleoprotein-associated proteins SNRPB and SNRPN. Interacts with 'Lys-48'-linked tetra-ubiquitin, but not with monoubiquitin or 'Lys-63'-linked ubiquitin chains. May interact with the exon junction complex (EJC) composed at least of CASC3, EIF4A3, MAGOH and RBM8A. Interacts with POLR2A (via the C-terminal domain (CTD)).

The protein localises to the cytoplasm. It localises to the nucleus. Functionally, scaffolding protein that specifically recognizes and binds dimethylarginine-containing proteins. Plays a role in the regulation of translation of target mRNAs by binding Arg/Gly-rich motifs (GAR) in dimethylarginine-containing proteins. In nucleus, acts as a coactivator: recognizes and binds asymmetric dimethylation on the core histone tails associated with transcriptional activation (H3R17me2a and H4R3me2a) and recruits proteins at these arginine-methylated loci. In cytoplasm, acts as an antiviral factor that participates in the assembly of stress granules together with G3BP1. This is Tudor domain-containing protein 3 (TDRD3) from Bos taurus (Bovine).